The primary structure comprises 265 residues: Arginine and glutamate-rich protein 1 (265 aa).

Basic residues predominate over residues 1-54; the sequence is MGRSRSRSSSRSKHAKSGKHNKKRSRSREKERVRKRSKSRESKRNRRRESRSRS. The segment at 1–66 is necessary and sufficient for RNA binding; that stretch reads MGRSRSRSSS…NTASRRERER (66 aa). Residues 1–106 are disordered; it reads MGRSRSRSSS…EKKAEYERQR (106 aa). Composition is skewed to basic and acidic residues over residues 60–76 and 85–106; these read SRRE…RIDI and SSLD…ERQR. A necessary and sufficient for transcriptional regulation region spans residues 67–265; sequence AASPPDRIDI…KLSFSLKSPD (199 aa). The LXXLL motif 1; degenerate signature appears at 164-168; it reads LLEEL. Residues 193 to 197 carry the LXXLL motif 2; degenerate motif; the sequence is LERIL. Residues 229–245 are compositionally biased toward basic and acidic residues; it reads RMKLEQERQRQQKEEQK. The interval 229-265 is disordered; the sequence is RMKLEQERQRQQKEEQKIILGKGKSRPKLSFSLKSPD.

Belongs to the ARGLU1 family.

It localises to the nucleus. It is found in the nucleus speckle. Its subcellular location is the chromosome. Dual function regulator of gene expression; regulator of transcription and modulator of alternative splicing. General coactivator of nuclear receptor-induced gene expression. In Xenopus tropicalis (Western clawed frog), this protein is Arginine and glutamate-rich protein 1 (arglu1).